The following is a 1612-amino-acid chain: DNA (cytosine-5)-methyltransferase PliMCI (1612 aa).

The 95-residue stretch at 7–101 (CDQVIPPNVR…NGDTKEEASS (95 aa)) folds into the DMAP1-binding domain. Residues 87–338 (TCSPVNGDTK…TAESKQPPLR (252 aa)) are disordered. The span at 94 to 110 (DTKEEASSNGKDDEKAE) shows a compositional bias: basic and acidic residues. Over residues 115–131 (NGTTSNGSTTNGSSGSS) the composition is skewed to low complexity. Over residues 132–142 (KANGHTNGGYV) the composition is skewed to polar residues. A compositionally biased stretch (low complexity) spans 143 to 154 (QSSSQEETGTSQ). 3 stretches are compositionally biased toward basic and acidic residues: residues 193–212 (VLGD…KKDV), 222–232 (EESATPDEKTL), and 260–289 (KKEE…KKEE). Residues 626–672 (ASERKKRCGVCEICQAPDCGKCTACKDMIKFGGSGKAKQACKDRRCP) form a CXXC-type zinc finger. Residues cysteine 633, cysteine 636, cysteine 639, cysteine 644, cysteine 647, cysteine 650, cysteine 666, and cysteine 671 each coordinate Zn(2+). The interval 677 to 708 (QEADENDIDEMDNSSNKENKDEKKAKKGRKLE) is disordered. Over residues 678 to 688 (EADENDIDEMD) the composition is skewed to acidic residues. Basic and acidic residues predominate over residues 691–708 (SNKENKDEKKAKKGRKLE). 2 consecutive BAH domains span residues 743-871 (EKIE…EDYE) and 967-1089 (NYRK…EDPP). Residues 1084 to 1121 (CFEDPPSKSRSTRMKGKGKGKGKGKAKGKIAVEKEEEK) form a disordered region. Over residues 1093-1111 (RSTRMKGKGKGKGKGKAKG) the composition is skewed to basic residues. An SAM-dependent MTase C5-type domain is found at 1131–1590 (LKCLDVFAGC…MEIKVCLQTK (460 aa)). Residues 1142–1143 (GL), 1160–1161 (EK), 1182–1183 (DC), and cysteine 1183 each bind S-adenosyl-L-methionine. Cysteine 1218 is an active-site residue. Residues asparagine 1569 and valine 1571 each coordinate S-adenosyl-L-methionine.

This sequence belongs to the class I-like SAM-binding methyltransferase superfamily. C5-methyltransferase family.

The protein resides in the nucleus. It catalyses the reaction a 2'-deoxycytidine in DNA + S-adenosyl-L-methionine = a 5-methyl-2'-deoxycytidine in DNA + S-adenosyl-L-homocysteine + H(+). Functionally, methylates CpG residues. This Paracentrotus lividus (Common sea urchin) protein is DNA (cytosine-5)-methyltransferase PliMCI (DNMT).